The sequence spans 150 residues: Large ribosomal subunit protein bL9 (150 aa).

Belongs to the bacterial ribosomal protein bL9 family.

Its function is as follows. Binds to the 23S rRNA. This chain is Large ribosomal subunit protein bL9, found in Shewanella woodyi (strain ATCC 51908 / MS32).